We begin with the raw amino-acid sequence, 287 residues long: D-apionate oxidoisomerase (287 aa).

NAD(+)-binding positions include 13 to 15 (GKM), glutamate 36, and aspartate 71. Positions 116 and 186 each coordinate Zn(2+).

This sequence belongs to the ApnO family. Zn(2+) is required as a cofactor.

The enzyme catalyses D-apionate + NAD(+) = 3-oxoisoapionate + NADH + H(+). It functions in the pathway carbohydrate metabolism. Functionally, involved in catabolism of D-apiose. Catalyzes the conversion of D-apionate to 3-oxo-isoapionate. This is D-apionate oxidoisomerase from Blautia hydrogenotrophica (strain DSM 10507 / JCM 14656 / S5a33) (Ruminococcus hydrogenotrophicus).